The following is a 159-amino-acid chain: NAD(P)H-quinone oxidoreductase subunit J, chloroplastic (159 aa).

It belongs to the complex I 30 kDa subunit family. In terms of assembly, NDH is composed of at least 16 different subunits, 5 of which are encoded in the nucleus.

The protein resides in the plastid. Its subcellular location is the chloroplast thylakoid membrane. It catalyses the reaction a plastoquinone + NADH + (n+1) H(+)(in) = a plastoquinol + NAD(+) + n H(+)(out). The enzyme catalyses a plastoquinone + NADPH + (n+1) H(+)(in) = a plastoquinol + NADP(+) + n H(+)(out). NDH shuttles electrons from NAD(P)H:plastoquinone, via FMN and iron-sulfur (Fe-S) centers, to quinones in the photosynthetic chain and possibly in a chloroplast respiratory chain. The immediate electron acceptor for the enzyme in this species is believed to be plastoquinone. Couples the redox reaction to proton translocation, and thus conserves the redox energy in a proton gradient. In Populus trichocarpa (Western balsam poplar), this protein is NAD(P)H-quinone oxidoreductase subunit J, chloroplastic.